Consider the following 276-residue polypeptide: Caspase-6 (276 aa).

Positions methionine 1–aspartate 5 are excised as a propeptide. The tract at residues lysine 25 to arginine 27 is tri-arginine exosite. Residue serine 62 is modified to Phosphoserine. The active site involves histidine 104. Residues asparagine 108–leucine 125 form a 130's region region. The active site involves cysteine 146. The propeptide occupies histidine 163–aspartate 175. At serine 239 the chain carries Phosphoserine. S-palmitoyl cysteine attachment occurs at residues cysteine 246 and cysteine 259.

This sequence belongs to the peptidase C14A family. Heterotetramer that consists of two anti-parallel arranged heterodimers, each one formed by a 18 kDa (p18) and a 11 kDa (p11) subunit. Interacts with BIRC6/bruce. Interacts with RIPK3. In terms of assembly, heterotetramer that consists of two anti-parallel arranged heterodimers, each one formed by a 18 kDa (Caspase-6 subunit p18) and a 11 kDa (Caspase-6 subunit p11) subunit. In terms of processing, phosphorylated by NUAK1; phosphorylation inhibits self-activation. Phosphorylation at Ser-239 by AMP-activated protein kinase (PRKAA1 or PRKAA2) inhibits autocleavage, preventing caspase activation, thereby preventing hepatocyte apoptosis. Post-translationally, palmitoylation by ZDHHC17 blocks dimerization and subsequent activation, leading to inhibit the cysteine protease activity. Can be cleaved and activated by different caspases, depending on the context. Cleaved and activated by caspase-8 (CASP8) and subsequently by caspase-3 (CASP3). Can also undergo autoactivation by mediating autocleavage at Asp-162 and Asp-175, while it is not able to cleave its N-terminal disordered prodomain. Cleaved and activated by CASP1, possibly in the context of inflammation. Highly expressed in lung, liver, kidney, testis, and heart. Lower levels in spleen, skeletal muscle and brain. Expressed in neurons.

Its subcellular location is the cytoplasm. The protein resides in the nucleus. It catalyses the reaction Strict requirement for Asp at position P1 and has a preferred cleavage sequence of Val-Glu-His-Asp-|-.. During activation, the N-terminal disordered prodomain is removed by cleavage. Concomitantly, double cleavage gives rise to a large 18-kDa and a small 11-kDa subunit. The two large and two small subunits then assemble to form the active CASP6 complex. Can be cleaved and activated by different caspases, depending on the context. Cleaved and activated by caspase-8 (CASP8) and subsequently by caspase-3 (CASP3). Can also undergo autoactivation by mediating autocleavage at Asp-162 and Asp-175, while it is not able to cleave its N-terminal disordered prodomain. Intramolecular cleavage at Asp-175 is a prerequisite for CASP6 self-activation. Cleaved and activated by CASP1 in neurons, possibly in the context of inflammation. Phosphorylation at Ser-239 inhibits autocleavage, preventing caspase activation. In terms of biological role, cysteine protease that plays essential roles in programmed cell death, axonal degeneration, development and innate immunity. Acts as a non-canonical executioner caspase during apoptosis: localizes in the nucleus and cleaves the nuclear structural protein NUMA1 and lamin A/LMNA thereby inducing nuclear shrinkage and fragmentation. Lamin-A/LMNA cleavage is required for chromatin condensation and nuclear disassembly during apoptotic execution. Acts as a regulator of liver damage by promoting hepatocyte apoptosis: in absence of phosphorylation by AMP-activated protein kinase (AMPK), catalyzes cleavage of BID, leading to cytochrome c release, thereby participating in nonalcoholic steatohepatitis. Cleaves PARK7/DJ-1 in cells undergoing apoptosis. Involved in intrinsic apoptosis by mediating cleavage of RIPK1. Furthermore, cleaves many transcription factors such as NF-kappa-B and cAMP response element-binding protein/CREBBP. Cleaves phospholipid scramblase proteins XKR4 and XKR9. In addition to apoptosis, involved in different forms of programmed cell death. Plays an essential role in defense against viruses by acting as a central mediator of the ZBP1-mediated pyroptosis, apoptosis, and necroptosis (PANoptosis), independently of its cysteine protease activity. PANoptosis is a unique inflammatory programmed cell death, which provides a molecular scaffold that allows the interactions and activation of machinery required for inflammasome/pyroptosis, apoptosis and necroptosis. Mechanistically, interacts with RIPK3 and enhances the interaction between RIPK3 and ZBP1, leading to ZBP1-mediated inflammasome activation and cell death. Plays an essential role in axon degeneration during axon pruning which is the remodeling of axons during neurogenesis but not apoptosis. Regulates B-cell programs both during early development and after antigen stimulation. Functionally, (Microbial infection) Proteolytically cleaves the N protein of coronaviruses. The cleavage leads to two fragments and modulates coronavirus replication by regulating IFN signaling. The two fragments produced by the cleavage interact with IRF3 inhibiting its nuclear translocation after activation and reduce the expression of IFNB and IFN-stimulated genes. In Mus musculus (Mouse), this protein is Caspase-6.